The primary structure comprises 397 residues: CCA-adding enzyme (397 aa).

Residues Gly-26 and Arg-29 each contribute to the ATP site. 2 residues coordinate CTP: Gly-26 and Arg-29. Asp-39 and Asp-41 together coordinate Mg(2+). Residues Arg-110, Asp-153, Arg-156, Arg-159, and Arg-162 each coordinate ATP. 5 residues coordinate CTP: Arg-110, Asp-153, Arg-156, Arg-159, and Arg-162.

Belongs to the tRNA nucleotidyltransferase/poly(A) polymerase family. Bacterial CCA-adding enzyme type 3 subfamily. Homodimer. Mg(2+) serves as cofactor.

The enzyme catalyses a tRNA precursor + 2 CTP + ATP = a tRNA with a 3' CCA end + 3 diphosphate. It carries out the reaction a tRNA with a 3' CCA end + 2 CTP + ATP = a tRNA with a 3' CCACCA end + 3 diphosphate. In terms of biological role, catalyzes the addition and repair of the essential 3'-terminal CCA sequence in tRNAs without using a nucleic acid template. Adds these three nucleotides in the order of C, C, and A to the tRNA nucleotide-73, using CTP and ATP as substrates and producing inorganic pyrophosphate. tRNA 3'-terminal CCA addition is required both for tRNA processing and repair. Also involved in tRNA surveillance by mediating tandem CCA addition to generate a CCACCA at the 3' terminus of unstable tRNAs. While stable tRNAs receive only 3'-terminal CCA, unstable tRNAs are marked with CCACCA and rapidly degraded. The sequence is that of CCA-adding enzyme from Bacillus cereus (strain ZK / E33L).